Consider the following 2499-residue polypeptide: Probable polyketide synthase 23 (2499 aa).

One can recognise a Ketosynthase family 3 (KS3) domain in the interval 11–430 (DNQVAIVGLG…GSNACVLLSE (420 aa)). Active-site for beta-ketoacyl synthase activity residues include C177, H316, and H354. Positions 623 to 656 (GITPSIIVGHSLGEVASAFCSGMIDLETACFVIY) are acyl/malonyl transferases. S633 functions as the For acyl/malonyl transferase activity in the catalytic mechanism. Residues 924–1044 (INQLGNKNEL…SRILMKSLDV (121 aa)) form an N-terminal hotdog fold region. The 286-residue stretch at 924–1209 (INQLGNKNEL…IASTLSTNID (286 aa)) folds into the PKS/mFAS DH domain. The active-site Proton acceptor; for dehydratase activity is the H956. The C-terminal hotdog fold stretch occupies residues 1059 to 1209 (NWSTLKREQL…IASTLSTNID (151 aa)). D1121 functions as the Proton donor; for dehydratase activity in the catalytic mechanism. The Carrier domain maps to 2414–2491 (EKEFSIRQDI…QIINIVTTKV (78 aa)). Residue S2451 is modified to O-(pantetheine 4'-phosphoryl)serine.

The cofactor is pantetheine 4'-phosphate.

Its function is as follows. Probable polyketide synthase. This chain is Probable polyketide synthase 23 (pks23), found in Dictyostelium discoideum (Social amoeba).